Consider the following 154-residue polypeptide: 6,7-dimethyl-8-ribityllumazine synthase (154 aa).

5-amino-6-(D-ribitylamino)uracil is bound by residues F22, 56-58, and 80-82; these read AFE and AVI. 85 to 86 contributes to the (2S)-2-hydroxy-3-oxobutyl phosphate binding site; it reads AT. H88 serves as the catalytic Proton donor. F113 is a binding site for 5-amino-6-(D-ribitylamino)uracil. R127 is a (2S)-2-hydroxy-3-oxobutyl phosphate binding site.

This sequence belongs to the DMRL synthase family. In terms of assembly, forms an icosahedral capsid composed of 60 subunits, arranged as a dodecamer of pentamers.

It carries out the reaction (2S)-2-hydroxy-3-oxobutyl phosphate + 5-amino-6-(D-ribitylamino)uracil = 6,7-dimethyl-8-(1-D-ribityl)lumazine + phosphate + 2 H2O + H(+). It functions in the pathway cofactor biosynthesis; riboflavin biosynthesis; riboflavin from 2-hydroxy-3-oxobutyl phosphate and 5-amino-6-(D-ribitylamino)uracil: step 1/2. Functionally, catalyzes the formation of 6,7-dimethyl-8-ribityllumazine by condensation of 5-amino-6-(D-ribitylamino)uracil with 3,4-dihydroxy-2-butanone 4-phosphate. This is the penultimate step in the biosynthesis of riboflavin. The chain is 6,7-dimethyl-8-ribityllumazine synthase from Anoxybacillus flavithermus (strain DSM 21510 / WK1).